The primary structure comprises 107 residues: Large ribosomal subunit protein uL24 (107 aa).

This sequence belongs to the universal ribosomal protein uL24 family. In terms of assembly, part of the 50S ribosomal subunit.

Functionally, one of two assembly initiator proteins, it binds directly to the 5'-end of the 23S rRNA, where it nucleates assembly of the 50S subunit. Its function is as follows. One of the proteins that surrounds the polypeptide exit tunnel on the outside of the subunit. This chain is Large ribosomal subunit protein uL24, found in Streptomyces coelicolor (strain ATCC BAA-471 / A3(2) / M145).